A 206-amino-acid polypeptide reads, in one-letter code: Guanylate kinase (206 aa).

Positions 6–184 (GTLYIISAPS…ALDDLKAIFR (179 aa)) constitute a Guanylate kinase-like domain. An ATP-binding site is contributed by 13 to 20 (APSGAGKS).

This sequence belongs to the guanylate kinase family.

It localises to the cytoplasm. The enzyme catalyses GMP + ATP = GDP + ADP. Essential for recycling GMP and indirectly, cGMP. This chain is Guanylate kinase, found in Pseudomonas fluorescens (strain Pf0-1).